The primary structure comprises 256 residues: MVKIGLYGASGKMAQSIISCLKDEKDATLSVAFSQKNEVENLSSELLTNDFAKFFEACDVIIDFSQKEATVALLNYARTNPKPLVIGTTGLNDDEKNLLHLASGTMPILYATNMSLGVAVLNRIARIASKVLREFDIEIVEQHHRHKKDAPSGTAMTLAGCVAEARDLNLKDVLVTGRAGMVGARSKDEIAVMALRGGDVVGRHTVGFYNDGEFIELNHTATSRATFSKGAIKAAIWLKDQSSGLYSIDDSLGLDD.

8–13 is an NAD(+) binding site; that stretch reads GASGKM. Lysine 36 provides a ligand contact to NADP(+). Residues 87 to 89 and 111 to 114 contribute to the NAD(+) site; these read GTT and ATNM. Histidine 143 functions as the Proton donor/acceptor in the catalytic mechanism. Histidine 144 is a binding site for (S)-2,3,4,5-tetrahydrodipicolinate. The active-site Proton donor is lysine 147. 153–154 is a binding site for (S)-2,3,4,5-tetrahydrodipicolinate; the sequence is GT.

Belongs to the DapB family.

It is found in the cytoplasm. It catalyses the reaction (S)-2,3,4,5-tetrahydrodipicolinate + NAD(+) + H2O = (2S,4S)-4-hydroxy-2,3,4,5-tetrahydrodipicolinate + NADH + H(+). The enzyme catalyses (S)-2,3,4,5-tetrahydrodipicolinate + NADP(+) + H2O = (2S,4S)-4-hydroxy-2,3,4,5-tetrahydrodipicolinate + NADPH + H(+). The protein operates within amino-acid biosynthesis; L-lysine biosynthesis via DAP pathway; (S)-tetrahydrodipicolinate from L-aspartate: step 4/4. Functionally, catalyzes the conversion of 4-hydroxy-tetrahydrodipicolinate (HTPA) to tetrahydrodipicolinate. This chain is 4-hydroxy-tetrahydrodipicolinate reductase, found in Campylobacter concisus (strain 13826).